Here is a 443-residue protein sequence, read N- to C-terminus: Probable ribonuclease FAU-1 (443 aa).

The protein belongs to the FAU-1 family.

Its function is as follows. Probable RNase involved in rRNA stability through maturation and/or degradation of precursor rRNAs. Binds to RNA in loop regions with AU-rich sequences. The sequence is that of Probable ribonuclease FAU-1 from Pyrobaculum aerophilum (strain ATCC 51768 / DSM 7523 / JCM 9630 / CIP 104966 / NBRC 100827 / IM2).